Consider the following 449-residue polypeptide: UDP-N-acetylmuramoylalanine--D-glutamate ligase (449 aa).

118-124 contributes to the ATP binding site; that stretch reads GSNGKTT.

The protein belongs to the MurCDEF family.

The protein resides in the cytoplasm. The catalysed reaction is UDP-N-acetyl-alpha-D-muramoyl-L-alanine + D-glutamate + ATP = UDP-N-acetyl-alpha-D-muramoyl-L-alanyl-D-glutamate + ADP + phosphate + H(+). Its pathway is cell wall biogenesis; peptidoglycan biosynthesis. Cell wall formation. Catalyzes the addition of glutamate to the nucleotide precursor UDP-N-acetylmuramoyl-L-alanine (UMA). This is UDP-N-acetylmuramoylalanine--D-glutamate ligase from Oceanobacillus iheyensis (strain DSM 14371 / CIP 107618 / JCM 11309 / KCTC 3954 / HTE831).